Here is a 376-residue protein sequence, read N- to C-terminus: Cytochrome-c peroxidase IdrP1 (376 aa).

Residues 1 to 24 (MGHIRSIRLALAVAAVCTAASAAA) form the signal peptide. Cytochrome c domains follow at residues 49 to 157 (DKVA…AAFK) and 203 to 354 (AEAQ…EALS). The heme c site is built by cysteine 71, cysteine 74, histidine 75, cysteine 218, cysteine 221, and histidine 222.

As to quaternary structure, the iodate reductase (Idr) complex is composed of a molybdopterin-dependent iodate reductase (IdrA and IdrB subunits) and two associated peroxidases (IdrP1 and IdrP2). Heme c is required as a cofactor.

It localises to the periplasm. The catalysed reaction is 2 Fe(II)-[cytochrome c] + H2O2 + 2 H(+) = 2 Fe(III)-[cytochrome c] + 2 H2O. Involved in iodate respiration. May play a critical role in detoxification of inadvertent H(2)O(2) generated by the iodate reductase IdrA/IdrB. In Denitromonas iodatirespirans, this protein is Cytochrome-c peroxidase IdrP1.